The chain runs to 118 residues: Large ribosomal subunit protein bL20 (118 aa).

It belongs to the bacterial ribosomal protein bL20 family.

In terms of biological role, binds directly to 23S ribosomal RNA and is necessary for the in vitro assembly process of the 50S ribosomal subunit. It is not involved in the protein synthesizing functions of that subunit. The polypeptide is Large ribosomal subunit protein bL20 (Sodalis glossinidius (strain morsitans)).